Here is a 371-residue protein sequence, read N- to C-terminus: uncharacterized protein (371 aa).

7 consecutive transmembrane segments (helical) span residues 9–29 (FTLDNIIQIGISLAILLVFLI), 58–78 (VLAFDKPARWFFVALGLFLAI), 98–118 (LIVALLCWGLCNLTATSSFIF), 133–153 (LAPFLSKLLRFVIIALSVSVI), 159–179 (YDVNGFVAGLGLGGLAFALAA), 183–203 (ISNFFGGIIIITEKPFTIGDW), and 330–350 (IIEILGAEGVQFAYPGQMVVV).

This sequence belongs to the MscS (TC 1.A.23) family.

The protein resides in the cell membrane. Its function is as follows. May play a role in resistance to osmotic downshock. This is an uncharacterized protein from Bacillus subtilis (strain 168).